The sequence spans 452 residues: Phosphoglucosamine mutase (452 aa).

Catalysis depends on Ser101, which acts as the Phosphoserine intermediate. Residues Ser101, Asp241, Asp243, and Asp245 each contribute to the Mg(2+) site. Residue Ser101 is modified to Phosphoserine.

This sequence belongs to the phosphohexose mutase family. Mg(2+) is required as a cofactor. In terms of processing, activated by phosphorylation.

It carries out the reaction alpha-D-glucosamine 1-phosphate = D-glucosamine 6-phosphate. Its function is as follows. Catalyzes the conversion of glucosamine-6-phosphate to glucosamine-1-phosphate. In Lactococcus lactis subsp. lactis (strain IL1403) (Streptococcus lactis), this protein is Phosphoglucosamine mutase.